Here is a 220-residue protein sequence, read N- to C-terminus: Redox-sensing transcriptional repressor Rex (220 aa).

Positions Leu-17–Phe-56 form a DNA-binding region, H-T-H motif. Residue Gly-91–Gly-96 coordinates NAD(+).

The protein belongs to the transcriptional regulatory Rex family. In terms of assembly, homodimer.

It is found in the cytoplasm. Modulates transcription in response to changes in cellular NADH/NAD(+) redox state. The sequence is that of Redox-sensing transcriptional repressor Rex from Roseiflexus sp. (strain RS-1).